Here is a 312-residue protein sequence, read N- to C-terminus: DNA-directed RNA polymerase subunit alpha (312 aa).

Positions 1 to 229 are alpha N-terminal domain (alpha-NTD); it reads MLQYQIDRIE…ELFQPLATVT (229 aa). The tract at residues 246–312 is alpha C-terminal domain (alpha-CTD); the sequence is IPLEELNLSV…ISIPQSRTSA (67 aa).

Belongs to the RNA polymerase alpha chain family. In terms of assembly, in cyanobacteria the RNAP catalytic core is composed of 2 alpha, 1 beta, 1 beta', 1 gamma and 1 omega subunit. When a sigma factor is associated with the core the holoenzyme is formed, which can initiate transcription.

The catalysed reaction is RNA(n) + a ribonucleoside 5'-triphosphate = RNA(n+1) + diphosphate. In terms of biological role, DNA-dependent RNA polymerase catalyzes the transcription of DNA into RNA using the four ribonucleoside triphosphates as substrates. This is DNA-directed RNA polymerase subunit alpha from Parasynechococcus marenigrum (strain WH8102).